Here is a 524-residue protein sequence, read N- to C-terminus: Phosphoenolpyruvate carboxykinase (ATP) (524 aa).

Positions 52, 188, and 194 each coordinate substrate. Residues Lys194, His213, and 229–237 (GLSGTGKTT) contribute to the ATP site. Mn(2+)-binding residues include Lys194 and His213. Asp250 contacts Mn(2+). Positions 278, 314, and 439 each coordinate ATP. Arg314 serves as a coordination point for substrate.

It belongs to the phosphoenolpyruvate carboxykinase (ATP) family. Mn(2+) is required as a cofactor.

It is found in the cytoplasm. The enzyme catalyses oxaloacetate + ATP = phosphoenolpyruvate + ADP + CO2. The protein operates within carbohydrate biosynthesis; gluconeogenesis. In terms of biological role, involved in the gluconeogenesis. Catalyzes the conversion of oxaloacetate (OAA) to phosphoenolpyruvate (PEP) through direct phosphoryl transfer between the nucleoside triphosphate and OAA. The protein is Phosphoenolpyruvate carboxykinase (ATP) of Campylobacter jejuni subsp. doylei (strain ATCC BAA-1458 / RM4099 / 269.97).